Reading from the N-terminus, the 368-residue chain is Phosphate acyltransferase (368 aa).

The disordered stretch occupies residues 337–368 (LGDGEHDAGGAGQASPAAGHHAEPSAAQSSKA).

Belongs to the PlsX family. Homodimer. Probably interacts with PlsY.

The protein localises to the cytoplasm. The catalysed reaction is a fatty acyl-[ACP] + phosphate = an acyl phosphate + holo-[ACP]. It functions in the pathway lipid metabolism; phospholipid metabolism. Its function is as follows. Catalyzes the reversible formation of acyl-phosphate (acyl-PO(4)) from acyl-[acyl-carrier-protein] (acyl-ACP). This enzyme utilizes acyl-ACP as fatty acyl donor, but not acyl-CoA. This Burkholderia orbicola (strain MC0-3) protein is Phosphate acyltransferase.